A 762-amino-acid chain; its full sequence is Lysyl oxidase homolog 2B (762 aa).

The signal sequence occupies residues 1-20 (MLALWSISFVLLCSWRLSYA). SRCR domains follow at residues 53–154 (LRLA…VVCS), 183–292 (IRPI…VSCI), 316–417 (VRLR…VKCN), and 427–536 (LRLS…VSCS). 9 disulfide bridges follow: Cys79–Cys143, Cys92–Cys153, Cys123–Cys133, Cys213–Cys281, Cys226–Cys291, Cys260–Cys270, Cys341–Cys406, Cys354–Cys416, and Cys385–Cys395. A glycan (N-linked (GlcNAc...) asparagine) is linked at Asn278. Residue Asn447 is glycosylated (N-linked (GlcNAc...) asparagine). 3 cysteine pairs are disulfide-bonded: Cys456–Cys522, Cys469–Cys535, and Cys503–Cys513. The tract at residues 540 to 742 (PDLVLNPQVV…WMYNCHIGGS (203 aa)) is lysyl-oxidase like. Residues Asp541 and Leu542 each contribute to the Ca(2+) site. 4 disulfide bridges follow: Cys565–Cys616, Cys571–Cys686, Cys648–Cys664, and Cys654–Cys676. His617, His619, and His621 together coordinate Cu cation. Asn635 carries N-linked (GlcNAc...) asparagine glycosylation. A cross-link (lysine tyrosylquinone (Lys-Tyr)) is located at residues 644 to 680 (KASFCLEDSECDEGIEKRYECANFGEQGITVGCWDTY). A 2',4',5'-topaquinone modification is found at Tyr680. Glu713, Asp715, Asn718, and Asn719 together coordinate Ca(2+). A disulfide bridge connects residues Cys723 and Cys737.

It belongs to the lysyl oxidase family. Requires Cu cation as cofactor. Lysine tyrosylquinone residue serves as cofactor. The lysine tyrosylquinone cross-link (LTQ) is generated by condensation of the epsilon-amino group of a lysine with a topaquinone produced by oxidation of tyrosine.

It is found in the secreted. Its subcellular location is the extracellular space. The protein localises to the extracellular matrix. It localises to the basement membrane. The protein resides in the nucleus. It is found in the chromosome. Its subcellular location is the endoplasmic reticulum. The catalysed reaction is L-lysyl-[protein] + O2 + H2O = (S)-2-amino-6-oxohexanoyl-[protein] + H2O2 + NH4(+). Its function is as follows. Mediates the post-translational oxidative deamination of lysine residues on target proteins leading to the formation of deaminated lysine (allysine). Acts as a transcription corepressor and specifically mediates deamination of trimethylated 'Lys-4' of histone H3 (H3K4me3), a specific tag for epigenetic transcriptional activation. Shows no activity against histone H3 when it is trimethylated on 'Lys-9' (H3K9me3) or 'Lys-27' (H3K27me3) or when 'Lys-4' is monomethylated (H3K4me1) or dimethylated (H3K4me2). Also mediates deamination of methylated TAF10, a member of the transcription factor IID (TFIID) complex, which induces release of TAF10 from promoters, leading to inhibition of TFIID-dependent transcription. LOXL2-mediated deamination of TAF10 results in transcriptional repression of genes required for embryonic stem cell pluripotency. Involved in epithelial to mesenchymal transition (EMT) and participates in repression of E-cadherin, probably by mediating deamination of histone H3. When secreted into the extracellular matrix, promotes cross-linking of extracellular matrix proteins by mediating oxidative deamination of peptidyl lysine residues in precursors to fibrous collagen and elastin. Acts as a regulator of sprouting angiogenesis, probably via collagen IV scaffolding. Acts as a regulator of chondrocyte differentiation, probably by regulating expression of factors that control chondrocyte differentiation. Required with loxl2a for correct expression of Sox2 and for neural differentiation. The chain is Lysyl oxidase homolog 2B (loxl2b) from Danio rerio (Zebrafish).